Consider the following 82-residue polypeptide: MKKNVHPKYNEISAYCSCGNIINTKSTLNRNLNIDVCHLCHPFYTGTQRILDTRGRVNIFNKRFNLSINADFLPIDKKLNKK.

Zn(2+)-binding residues include cysteine 16, cysteine 18, cysteine 37, and cysteine 40.

This sequence belongs to the bacterial ribosomal protein bL31 family. Type A subfamily. Part of the 50S ribosomal subunit. Requires Zn(2+) as cofactor.

Functionally, binds the 23S rRNA. The chain is Large ribosomal subunit protein bL31 from Blochmanniella pennsylvanica (strain BPEN).